Reading from the N-terminus, the 186-residue chain is Glutathione peroxidase 7 (186 aa).

The first 18 residues, 1–18 (MVAAVATAWLLLWAAACA), serve as a signal peptide directing secretion. The active site involves Cys56.

The protein belongs to the glutathione peroxidase family.

It localises to the secreted. The enzyme catalyses 2 glutathione + H2O2 = glutathione disulfide + 2 H2O. Its function is as follows. It protects esophageal epithelia from hydrogen peroxide-induced oxidative stress. It suppresses acidic bile acid-induced reactive oxygen species (ROS) and protects against oxidative DNA damage and double-strand breaks. The protein is Glutathione peroxidase 7 (Gpx7) of Mus musculus (Mouse).